A 298-amino-acid chain; its full sequence is Ethanolamine ammonia-lyase small subunit (298 aa).

Residues V210, E231, and C261 each coordinate adenosylcob(III)alamin.

The protein belongs to the EutC family. The basic unit is a heterodimer which dimerizes to form tetramers. The heterotetramers trimerize; 6 large subunits form a core ring with 6 small subunits projecting outwards. Requires adenosylcob(III)alamin as cofactor.

It localises to the bacterial microcompartment. The enzyme catalyses ethanolamine = acetaldehyde + NH4(+). Its pathway is amine and polyamine degradation; ethanolamine degradation. In terms of biological role, catalyzes the deamination of various vicinal amino-alcohols to oxo compounds. Allows this organism to utilize ethanolamine as the sole source of nitrogen and carbon in the presence of external vitamin B12. The chain is Ethanolamine ammonia-lyase small subunit from Salmonella agona (strain SL483).